Reading from the N-terminus, the 124-residue chain is Ribonuclease pancreatic (124 aa).

The segment covering 1–13 has biased composition (basic and acidic residues); it reads KETSAQKFERQHM. The disordered stretch occupies residues 1–25; that stretch reads KETSAQKFERQHMDSTGSSSSSPTY. Residues lysine 7 and arginine 10 each coordinate substrate. Residue histidine 12 is the Proton acceptor of the active site. Disulfide bonds link cysteine 26-cysteine 84, cysteine 40-cysteine 95, cysteine 58-cysteine 110, and cysteine 65-cysteine 72. Substrate-binding positions include 41 to 45, lysine 66, and arginine 85; that span reads KPVNT. The active-site Proton donor is the histidine 119.

The protein belongs to the pancreatic ribonuclease family. In terms of assembly, monomer. Interacts with and forms tight 1:1 complexes with RNH1. Dimerization of two such complexes may occur. Interaction with RNH1 inhibits this protein. In terms of tissue distribution, pancreas.

Its subcellular location is the secreted. The catalysed reaction is an [RNA] containing cytidine + H2O = an [RNA]-3'-cytidine-3'-phosphate + a 5'-hydroxy-ribonucleotide-3'-[RNA].. It carries out the reaction an [RNA] containing uridine + H2O = an [RNA]-3'-uridine-3'-phosphate + a 5'-hydroxy-ribonucleotide-3'-[RNA].. In terms of biological role, endonuclease that catalyzes the cleavage of RNA on the 3' side of pyrimidine nucleotides. Acts on single-stranded and double-stranded RNA. The protein is Ribonuclease pancreatic (RNASE1) of Ondatra zibethicus (Muskrat).